The following is an 83-amino-acid chain: Small ribosomal subunit protein uS17 (83 aa).

This sequence belongs to the universal ribosomal protein uS17 family. As to quaternary structure, part of the 30S ribosomal subunit.

Functionally, one of the primary rRNA binding proteins, it binds specifically to the 5'-end of 16S ribosomal RNA. The polypeptide is Small ribosomal subunit protein uS17 (Ehrlichia chaffeensis (strain ATCC CRL-10679 / Arkansas)).